The chain runs to 251 residues: Zwei Ig domain protein zig-3 (251 aa).

The signal sequence occupies residues 1–19 (MLLICISVLAAISAHPLSS). Ig-like C2-type domains lie at 42–144 (PSLK…AKIS) and 160–244 (PVIT…TFLY). 2 cysteine pairs are disulfide-bonded: cysteine 65–cysteine 128 and cysteine 181–cysteine 228.

Expressed in PVT, AIM and ASI neurons, in vulva and weakly in body wall muscles.

The protein localises to the secreted. In terms of biological role, required for maintaining axon position of PVQ and PVP neurons postembryonically in the ventral nerve cord (VNC) by preventing axons drifting into the opposite side of the VNC that could occur during body growth and movement. The polypeptide is Zwei Ig domain protein zig-3 (Caenorhabditis elegans).